Here is a 144-residue protein sequence, read N- to C-terminus: Large ribosomal subunit protein uL11 (144 aa).

Belongs to the universal ribosomal protein uL11 family. Part of the ribosomal stalk of the 50S ribosomal subunit. Interacts with L10 and the large rRNA to form the base of the stalk. L10 forms an elongated spine to which L12 dimers bind in a sequential fashion forming a multimeric L10(L12)X complex. In terms of processing, one or more lysine residues are methylated.

Functionally, forms part of the ribosomal stalk which helps the ribosome interact with GTP-bound translation factors. The protein is Large ribosomal subunit protein uL11 of Corynebacterium efficiens (strain DSM 44549 / YS-314 / AJ 12310 / JCM 11189 / NBRC 100395).